Reading from the N-terminus, the 290-residue chain is Porphobilinogen deaminase (290 aa).

Cysteine 237 is subject to S-(dipyrrolylmethanemethyl)cysteine.

It belongs to the HMBS family. Monomer. It depends on dipyrromethane as a cofactor.

The catalysed reaction is 4 porphobilinogen + H2O = hydroxymethylbilane + 4 NH4(+). Its pathway is porphyrin-containing compound metabolism; protoporphyrin-IX biosynthesis; coproporphyrinogen-III from 5-aminolevulinate: step 2/4. In terms of biological role, tetrapolymerization of the monopyrrole PBG into the hydroxymethylbilane pre-uroporphyrinogen in several discrete steps. The chain is Porphobilinogen deaminase from Clostridium botulinum (strain Langeland / NCTC 10281 / Type F).